The following is a 1110-amino-acid chain: Sex-determining transformer protein 1 (1110 aa).

Disordered stretches follow at residues 1 to 103 and 170 to 202; these read MMAP…AQQS and TINGKRVGRPPGTFKRPQNNAANSSNSGNDSDM. Over residues 44–61 the composition is skewed to basic and acidic residues; that stretch reads GSEDKQPGGGDVKTENDP. Polar residues predominate over residues 65 to 90; it reads GLGSATSNFIQSSVPPSHQTLSNPLQ. Positions 188–201 are enriched in low complexity; that stretch reads NNAANSSNSGNDSD. The segment at 208-233 adopts a C2H2-type 1; low DNA-binding affinity zinc-finger fold; it reads LTCRWKSCNSSFQTLKALVDHVQESH. The segment at 244 to 270 adopts a C2H2-type 2; low DNA-binding affinity zinc-finger fold; it reads WRCEWEGCDRNETFKALYMLIVHVRRH. C2H2-type zinc fingers lie at residues 276-300, 306-331, and 337-362; these read NKCEYPGCGKEYSRLENLKTHRRTH, YKCEFADCEKAFSNASDRAKHQNRTH, and YSCQIPQCTKSYTDPSSLRKHIKAVH. Disordered regions lie at residues 363–397, 594–682, 875–895, and 1057–1110; these read GDDEYEKAKKSRPANYSNRRRPDHRLAPPTGAMSH, EVEP…GSGE, RNVGGFGDEEDRNNRGHDQDR, and QEQP…RHQF. A compositionally biased stretch (low complexity) spans 597–606; it reads PLQQQQQQEP. Residues 641–652 show a composition bias toward gly residues; it reads GNNGDGGFGGSG. The segment covering 669 to 678 has biased composition (polar residues); it reads PISQNGSRAS. Over residues 886-895 the composition is skewed to basic and acidic residues; it reads RNNRGHDQDR. Residues 1057–1066 show a composition bias toward polar residues; the sequence is QEQPTSSFSS. Residues 1076–1086 are compositionally biased toward pro residues; it reads ALPPPPPPPAP. The span at 1092–1103 shows a compositional bias: basic and acidic residues; that stretch reads SADNKDDSENIP.

Belongs to the GLI C2H2-type zinc-finger protein family. As to quaternary structure, interacts with the MX regulatory domain of tra-2. In terms of tissue distribution, expressed in intestine and gonads (at protein level).

The protein resides in the cytoplasm. It localises to the nucleus. In terms of biological role, plays a major role in controlling sexual phenotype. Terminal global regulator in a well-characterized cascade of sex-determining genes. Promotes female development. Interacts with tra-2 to promote spermatogenesis. Promotes spermatogenesis through the Tip60 HAT complex and by regulating the expression of genes, such as fog-3, required for male development. Association with chromatin and at the fog-3 promoter requires wdr-5.1, and may also require wdr-5.2. With trr-1, activates the fog-3 gene to determine sperm/oocyte cell fate. In hermaphrodites, binds to an intronic regulatory site in the ceh-30 gene, preventing ceh-30 transcription and thereby preventing survival of the CEM (cephalic male) sensory neurons. Represses the expression of the transcription factor dmd-3 in hermaphrodites to govern the timing and extent of male tail tip morphogenesis. Plays a role in controlling the sex-specific differentiation of PHC sensory neurons and represses the development of male-specific morphological features. The sequence is that of Sex-determining transformer protein 1 from Caenorhabditis elegans.